Here is a 345-residue protein sequence, read N- to C-terminus: S-adenosylmethionine:tRNA ribosyltransferase-isomerase (345 aa).

This sequence belongs to the QueA family. In terms of assembly, monomer.

Its subcellular location is the cytoplasm. It catalyses the reaction 7-aminomethyl-7-carbaguanosine(34) in tRNA + S-adenosyl-L-methionine = epoxyqueuosine(34) in tRNA + adenine + L-methionine + 2 H(+). Its pathway is tRNA modification; tRNA-queuosine biosynthesis. In terms of biological role, transfers and isomerizes the ribose moiety from AdoMet to the 7-aminomethyl group of 7-deazaguanine (preQ1-tRNA) to give epoxyqueuosine (oQ-tRNA). The polypeptide is S-adenosylmethionine:tRNA ribosyltransferase-isomerase (Shewanella sp. (strain W3-18-1)).